We begin with the raw amino-acid sequence, 285 residues long: MRMIIVSGRSGSGKSTALDVLEDNGFYCVDNLPAGLLPELAERALINTELAEPLLAVSIDARNLPSHLTRFPQMLDEVRSRNIQCDVLYLDADEATLLKRFSETRRRHPLSTADRSLAEAIRDETTLLGPIIDLADLKINTTHLNLYQLRDALKLRLLNKPEPGTAFLIESFGFKRGMPVDADLVFDVRCLPNPYWKPELRDHSGLEQPVIDYLSVQPDVEEMFQDIFAYLNKWLPRFAASNRSYVTIAIGCTGGHHRSVYLTERLGQVLQQSLKNVQVRHRDLS.

8 to 15 contributes to the ATP binding site; the sequence is GRSGSGKS. A GTP-binding site is contributed by 60–63; it reads DARN.

Belongs to the RapZ-like family.

Displays ATPase and GTPase activities. This Pseudomonas savastanoi pv. phaseolicola (strain 1448A / Race 6) (Pseudomonas syringae pv. phaseolicola (strain 1448A / Race 6)) protein is Nucleotide-binding protein PSPPH_4154.